Here is a 383-residue protein sequence, read N- to C-terminus: UDP-N-acetylglucosamine--N-acetylmuramyl-(pentapeptide) pyrophosphoryl-undecaprenol N-acetylglucosamine transferase (383 aa).

UDP-N-acetyl-alpha-D-glucosamine-binding positions include 10–12 (TGG), Asn124, Arg165, Ser190, Ile245, and Gln290. Residues 364-383 (PFGQAREPGQKPARPPDLAS) are disordered.

This sequence belongs to the glycosyltransferase 28 family. MurG subfamily.

It localises to the cell inner membrane. The enzyme catalyses di-trans,octa-cis-undecaprenyl diphospho-N-acetyl-alpha-D-muramoyl-L-alanyl-D-glutamyl-meso-2,6-diaminopimeloyl-D-alanyl-D-alanine + UDP-N-acetyl-alpha-D-glucosamine = di-trans,octa-cis-undecaprenyl diphospho-[N-acetyl-alpha-D-glucosaminyl-(1-&gt;4)]-N-acetyl-alpha-D-muramoyl-L-alanyl-D-glutamyl-meso-2,6-diaminopimeloyl-D-alanyl-D-alanine + UDP + H(+). The protein operates within cell wall biogenesis; peptidoglycan biosynthesis. Cell wall formation. Catalyzes the transfer of a GlcNAc subunit on undecaprenyl-pyrophosphoryl-MurNAc-pentapeptide (lipid intermediate I) to form undecaprenyl-pyrophosphoryl-MurNAc-(pentapeptide)GlcNAc (lipid intermediate II). The protein is UDP-N-acetylglucosamine--N-acetylmuramyl-(pentapeptide) pyrophosphoryl-undecaprenol N-acetylglucosamine transferase of Anaeromyxobacter sp. (strain K).